The following is a 202-amino-acid chain: MPPRPRFDRRAPVRELPNINDRIKYPQLRVVDADGTQLGVINREAALEVAQERELDLVLVSEKANPPVCRIMNYGKFKFEQEKKAKEAKKKSHQTEVKEVKMRYKIDQHDYEVRINQATRFLKAGDKVKCTVIFRGREIQHTNLAESLLARMAKDLEEQAEVQQTPKREGRNMIMFLTPRKTPLIKNEKEVTTSAKAERTIS.

It belongs to the IF-3 family. Monomer.

Its subcellular location is the cytoplasm. In terms of biological role, IF-3 binds to the 30S ribosomal subunit and shifts the equilibrium between 70S ribosomes and their 50S and 30S subunits in favor of the free subunits, thus enhancing the availability of 30S subunits on which protein synthesis initiation begins. The chain is Translation initiation factor IF-3 from Prochlorococcus marinus (strain MIT 9211).